Consider the following 746-residue polypeptide: Hyperosmolality-gated Ca2+ permeable channel 2.1 (746 aa).

The next 10 helical transmembrane spans lie at 3 to 23 (ISAL…LLSL), 90 to 110 (MVIF…AFVL), 144 to 164 (LWVH…LLYF), 357 to 377 (IATL…VTFI), 405 to 425 (VITG…VPPL), 445 to 465 (ACIK…ILSG), 492 to 512 (AGFF…CEIM), 560 to 580 (VIAP…YLIY), 601 to 621 (IFHN…LGFF), and 623 to 643 (LKLS…TLLF). The segment covering 692-702 (LHSQKSSSKAE) has biased composition (polar residues). The disordered stretch occupies residues 692–723 (LHSQKSSSKAECSNPFKKQELPDPEKLKPEEG). A compositionally biased stretch (basic and acidic residues) spans 708–723 (KKQELPDPEKLKPEEG).

It belongs to the CSC1 (TC 1.A.17) family.

It is found in the membrane. In terms of biological role, acts as an osmosensitive calcium-permeable cation channel. The protein is Hyperosmolality-gated Ca2+ permeable channel 2.1 of Arabidopsis thaliana (Mouse-ear cress).